We begin with the raw amino-acid sequence, 56 residues long: MAAKGAREKIRLVSSAETGHFYTTDKNKRNMPEKMEIKKFDPVVRKHVIYREAKIK.

It belongs to the bacterial ribosomal protein bL33 family.

The polypeptide is Large ribosomal subunit protein bL33 (Actinobacillus succinogenes (strain ATCC 55618 / DSM 22257 / CCUG 43843 / 130Z)).